The following is a 268-amino-acid chain: MRRIAVMGAAGRMGKILVEAVQQRAPLTGLTAAIVRPGSTLIGVDAGELASLGRIGVPLSGNLESVAEEFDVLIDFTLPEVMLKNLAFCRKAGKAMVIGTTGLDAAQKQLLAEAGKDIPIVFAANFSVGVNLSLKLLDMAARVLAEDADIEIIEAHHRHKIDAPSGTALRMGEVIANALDRDLQKVAVYGREGHTGARERETIGFATVRGGDVVGDHTVLFACEGERLEITHKASSRMTFAKGAVRAALWLDAREPGLYDMQDVLGLH.

Residue 8 to 13 (GAAGRM) participates in NAD(+) binding. Arginine 36 serves as a coordination point for NADP(+). NAD(+) is bound by residues 99-101 (GTT) and 123-126 (AANF). Histidine 156 serves as the catalytic Proton donor/acceptor. Histidine 157 serves as a coordination point for (S)-2,3,4,5-tetrahydrodipicolinate. Lysine 160 acts as the Proton donor in catalysis. A (S)-2,3,4,5-tetrahydrodipicolinate-binding site is contributed by 166 to 167 (GT).

The protein belongs to the DapB family.

The protein resides in the cytoplasm. It carries out the reaction (S)-2,3,4,5-tetrahydrodipicolinate + NAD(+) + H2O = (2S,4S)-4-hydroxy-2,3,4,5-tetrahydrodipicolinate + NADH + H(+). It catalyses the reaction (S)-2,3,4,5-tetrahydrodipicolinate + NADP(+) + H2O = (2S,4S)-4-hydroxy-2,3,4,5-tetrahydrodipicolinate + NADPH + H(+). The protein operates within amino-acid biosynthesis; L-lysine biosynthesis via DAP pathway; (S)-tetrahydrodipicolinate from L-aspartate: step 4/4. Its function is as follows. Catalyzes the conversion of 4-hydroxy-tetrahydrodipicolinate (HTPA) to tetrahydrodipicolinate. The sequence is that of 4-hydroxy-tetrahydrodipicolinate reductase from Pseudomonas fluorescens (strain Pf0-1).